The following is a 369-amino-acid chain: Type 2 DNA topoisomerase 6 subunit A (369 aa).

Residues Gln-11–Ala-149 form the Topo IIA-type catalytic domain. The O-(5'-phospho-DNA)-tyrosine intermediate role is filled by Tyr-106. Residues Glu-202 and Asp-254 each contribute to the Mg(2+) site.

It belongs to the TOP6A family. As to quaternary structure, homodimer. Heterotetramer of two Top6A and two Top6B chains. It depends on Mg(2+) as a cofactor.

The enzyme catalyses ATP-dependent breakage, passage and rejoining of double-stranded DNA.. Relaxes both positive and negative superturns and exhibits a strong decatenase activity. This chain is Type 2 DNA topoisomerase 6 subunit A, found in Methanosarcina barkeri (strain Fusaro / DSM 804).